Consider the following 235-residue polypeptide: 7-cyano-7-deazaguanine synthase (235 aa).

Position 11-21 (11-21 (FSGGQDSTTCV)) interacts with ATP. Zn(2+) is bound by residues C199, C214, C217, and C220.

Belongs to the QueC family. Zn(2+) serves as cofactor.

The enzyme catalyses 7-carboxy-7-deazaguanine + NH4(+) + ATP = 7-cyano-7-deazaguanine + ADP + phosphate + H2O + H(+). The protein operates within purine metabolism; 7-cyano-7-deazaguanine biosynthesis. In terms of biological role, catalyzes the ATP-dependent conversion of 7-carboxy-7-deazaguanine (CDG) to 7-cyano-7-deazaguanine (preQ(0)). The protein is 7-cyano-7-deazaguanine synthase of Janthinobacterium sp. (strain Marseille) (Minibacterium massiliensis).